The following is a 142-amino-acid chain: Large ribosomal subunit protein uL11 (142 aa).

Residues 84-103 (AGVKSGSGRPNSDKVGTVTD) are disordered.

The protein belongs to the universal ribosomal protein uL11 family. In terms of assembly, part of the ribosomal stalk of the 50S ribosomal subunit. Interacts with L10 and the large rRNA to form the base of the stalk. L10 forms an elongated spine to which L12 dimers bind in a sequential fashion forming a multimeric L10(L12)X complex. One or more lysine residues are methylated.

Its function is as follows. Forms part of the ribosomal stalk which helps the ribosome interact with GTP-bound translation factors. This Aliivibrio salmonicida (strain LFI1238) (Vibrio salmonicida (strain LFI1238)) protein is Large ribosomal subunit protein uL11.